The chain runs to 587 residues: ATP-dependent zinc metalloprotease FtsH 2 (587 aa).

The Cytoplasmic segment spans residues 1–12 (MSSDRTREVTKR). A helical membrane pass occupies residues 13–33 (ILMVLFGLWLLQFFFLPPLTT). Residues 34–102 (RPTELSYSAF…EQRYEVTRTP (69 aa)) are Extracellular-facing. A helical membrane pass occupies residues 103 to 123 (WWVTLLPTVLWLAVMVGLFAW). Residues 124–587 (AQKRQAGAFG…GDDVRRILSA (464 aa)) are Cytoplasmic-facing. Residue 192–199 (GPPGTGKT) participates in ATP binding. His416 lines the Zn(2+) pocket. The active site involves Glu417. His420 and Asp492 together coordinate Zn(2+).

It in the central section; belongs to the AAA ATPase family. The protein in the C-terminal section; belongs to the peptidase M41 family. Homohexamer. It depends on Zn(2+) as a cofactor.

Its subcellular location is the cell membrane. Functionally, acts as a processive, ATP-dependent zinc metallopeptidase for both cytoplasmic and membrane proteins. Plays a role in the quality control of integral membrane proteins. In Symbiobacterium thermophilum (strain DSM 24528 / JCM 14929 / IAM 14863 / T), this protein is ATP-dependent zinc metalloprotease FtsH 2.